A 222-amino-acid chain; its full sequence is Glutathione S-transferase A4 (222 aa).

Residue Met1 is modified to N-acetylmethionine. Positions 3 to 83 (ARPKLHYPNG…YIADKHNLFG (81 aa)) constitute a GST N-terminal domain. Glutathione contacts are provided by residues Tyr9, 54–55 (QV), and 67–68 (QT). The GST C-terminal domain maps to 85–208 (NLKERTLIDM…EPGSKKKPPP (124 aa)). Residue Tyr212 participates in substrate binding.

It belongs to the GST superfamily. Alpha family. Homodimer. In terms of tissue distribution, expressed at a high level in brain, placenta, and skeletal muscle and much lower in lung and liver.

Its subcellular location is the cytoplasm. The enzyme catalyses RX + glutathione = an S-substituted glutathione + a halide anion + H(+). Conjugation of reduced glutathione to a wide number of exogenous and endogenous hydrophobic electrophiles. This isozyme has a high catalytic efficiency with 4-hydroxyalkenals such as 4-hydroxynonenal (4-HNE). This chain is Glutathione S-transferase A4 (GSTA4), found in Homo sapiens (Human).